A 455-amino-acid chain; its full sequence is Venom prothrombin activator trocarin-D (455 aa).

Positions 1–20 (MAPQLLLCLILTFLWSLPEA) are cleaved as a signal peptide. Residues 21-40 (ESNVFLKSKVANRFLQRTKR) constitute a propeptide that is removed on maturation. One can recognise a Gla domain in the interval 41-86 (SNSLFEEIRPGNIERECIEEKCSKEEAREVFEDNEKTETFWNVYVD). 11 positions are modified to 4-carboxyglutamate: glutamate 46, glutamate 47, glutamate 54, glutamate 56, glutamate 59, glutamate 60, glutamate 65, glutamate 66, glutamate 69, glutamate 72, and glutamate 75. The cysteines at positions 57 and 62 are disulfide-linked. Positions 86-122 (DGDQCSSNPCHYRGTCKDGIGSYTCTCLPNYEGKNCE) constitute an EGF-like 1; calcium-binding domain. Intrachain disulfides connect cysteine 90–cysteine 101, cysteine 95–cysteine 110, cysteine 112–cysteine 121, cysteine 129–cysteine 140, cysteine 136–cysteine 149, cysteine 151–cysteine 164, cysteine 172–cysteine 328, cysteine 216–cysteine 221, cysteine 236–cysteine 252, cysteine 376–cysteine 390, and cysteine 401–cysteine 429. Serine 92 carries O-linked (Hex...) serine glycosylation. Positions 129–164 (CRVDNGNCWHFCKRVQSETQCSCAESYRLGVDGHSC) constitute an EGF-like 2 domain. Positions 182 to 209 (REASLPDFVQSQKATLLKKSDNPSPDIR) are cleaved as a propeptide — activation peptide. Positions 210 to 453 (IVNGMDCKLG…FIPWIKKIMS (244 aa)) constitute a Peptidase S1 domain. The active-site Charge relay system is the histidine 251. N-linked (GlcNAc...) asparagine glycosylation is present at asparagine 254. The active-site Charge relay system is the aspartate 308. The active-site Charge relay system is serine 405.

Belongs to the peptidase S1 family. Snake venom subfamily. Heterodimer of a light chain and a heavy chain; disulfide-linked. Post-translationally, gamma-carboxyglutamate residues are formed by vitamin K dependent carboxylation. These residues are essential for the binding of calcium. In terms of processing, the O-linked saccharides at Ser-92 are a mixture of Xyl-Glc, and Glc along with smaller amounts of Xyl-GlcNAc, GlcNAc, Gal, GalNAc, Xyl-Gal, and Xyl-GalNAc, suggesting that the glycosyl transferases responsible for this modification are non-specific. The N-linked carbohydrate at Asn-254 (Asn-45 of the heavy chain) is a sialylated and diantennary oligosaccharide. As to expression, expressed by the venom gland.

The protein resides in the secreted. The catalysed reaction is Selective cleavage of Arg-|-Thr and then Arg-|-Ile bonds in prothrombin to form thrombin.. Activated by calcium and phospholipids. In terms of biological role, snake prothrombin activator that attacks the hemostatic system of prey. This protein is functionally similar to blood coagulation factor Xa. Induces cyanosis and death in mice at 1 mg/kg body weight during blood clotting. The protein is Venom prothrombin activator trocarin-D of Tropidechis carinatus (Australian rough-scaled snake).